Reading from the N-terminus, the 295-residue chain is 33 kDa chaperonin (295 aa).

2 disulfides stabilise this stretch: Cys230–Cys232 and Cys264–Cys267.

This sequence belongs to the HSP33 family. Under oxidizing conditions two disulfide bonds are formed involving the reactive cysteines. Under reducing conditions zinc is bound to the reactive cysteines and the protein is inactive.

The protein resides in the cytoplasm. In terms of biological role, redox regulated molecular chaperone. Protects both thermally unfolding and oxidatively damaged proteins from irreversible aggregation. Plays an important role in the bacterial defense system toward oxidative stress. This Ectopseudomonas mendocina (strain ymp) (Pseudomonas mendocina) protein is 33 kDa chaperonin.